Here is a 675-residue protein sequence, read N- to C-terminus: UvrABC system protein B (675 aa).

Positions 35 to 192 constitute a Helicase ATP-binding domain; it reads QGMRDGLMYQ…ARLVAMQYTR (158 aa). Residue 48–55 coordinates ATP; the sequence is GVTGSGKT. Positions 101–124 match the Beta-hairpin motif; it reads YYDYYQPEAYVPTRDLFIEKDSSI. Positions 439–605 constitute a Helicase C-terminal domain; sequence QVDDLLGEIK…GVNKAVRELI (167 aa). Positions 633–668 constitute a UVR domain; that stretch reads AREIRRLEKLMTDHARNLEFEQAAAARDALNALKQR.

This sequence belongs to the UvrB family. As to quaternary structure, forms a heterotetramer with UvrA during the search for lesions. Interacts with UvrC in an incision complex.

It is found in the cytoplasm. The UvrABC repair system catalyzes the recognition and processing of DNA lesions. A damage recognition complex composed of 2 UvrA and 2 UvrB subunits scans DNA for abnormalities. Upon binding of the UvrA(2)B(2) complex to a putative damaged site, the DNA wraps around one UvrB monomer. DNA wrap is dependent on ATP binding by UvrB and probably causes local melting of the DNA helix, facilitating insertion of UvrB beta-hairpin between the DNA strands. Then UvrB probes one DNA strand for the presence of a lesion. If a lesion is found the UvrA subunits dissociate and the UvrB-DNA preincision complex is formed. This complex is subsequently bound by UvrC and the second UvrB is released. If no lesion is found, the DNA wraps around the other UvrB subunit that will check the other stand for damage. The sequence is that of UvrABC system protein B from Bordetella petrii (strain ATCC BAA-461 / DSM 12804 / CCUG 43448).